The chain runs to 162 residues: Endoribonuclease YbeY (162 aa).

Zn(2+) contacts are provided by His-117, His-121, and His-127.

This sequence belongs to the endoribonuclease YbeY family. The cofactor is Zn(2+).

It localises to the cytoplasm. In terms of biological role, single strand-specific metallo-endoribonuclease involved in late-stage 70S ribosome quality control and in maturation of the 3' terminus of the 16S rRNA. The protein is Endoribonuclease YbeY of Francisella tularensis subsp. novicida (strain U112).